We begin with the raw amino-acid sequence, 141 residues long: Putative nickel-responsive regulator (141 aa).

Ni(2+)-binding residues include His80, His91, His93, and Cys99.

It belongs to the transcriptional regulatory CopG/NikR family. Requires Ni(2+) as cofactor.

In terms of biological role, transcriptional regulator. The sequence is that of Putative nickel-responsive regulator from Methanococcus maripaludis (strain C5 / ATCC BAA-1333).